We begin with the raw amino-acid sequence, 76 residues long: Small proline-rich protein 4 (76 aa).

Residues 38-76 (PKTKDPCVPQAKKQCPARSTTNPAQEKCPAQQDPKCKQK) form a disordered region.

This sequence belongs to the cornifin (SPRR) family. In terms of processing, cross-linked to membrane proteins by transglutaminase.

It is found in the cytoplasm. The protein localises to the cell cortex. In terms of biological role, cross-linked envelope protein of keratinocytes. Involved in UV-induced cornification. This is Small proline-rich protein 4 (Sprr4) from Mus musculus (Mouse).